A 368-amino-acid chain; its full sequence is Protein mab-21-like (368 aa).

Belongs to the mab-21 family.

The polypeptide is Protein mab-21-like (Drosophila pseudoobscura pseudoobscura (Fruit fly)).